The following is a 565-amino-acid chain: Phospholipase B-like protein C (565 aa).

An N-terminal signal peptide occupies residues 1-21 (MNKIIILISLFLNFLFGYVVC). Asparagine 53, asparagine 84, asparagine 118, asparagine 200, asparagine 201, asparagine 211, asparagine 266, asparagine 302, asparagine 406, and asparagine 485 each carry an N-linked (GlcNAc...) asparagine glycan.

Belongs to the phospholipase B-like family.

It is found in the secreted. Probable phospholipase. This chain is Phospholipase B-like protein C (plbC), found in Dictyostelium discoideum (Social amoeba).